Reading from the N-terminus, the 183-residue chain is Casparian strip membrane protein 2 (183 aa).

The Cytoplasmic segment spans residues 1–23; sequence MDSGEQGETSKAPLNKGVSRGVS. A helical membrane pass occupies residues 24–44; it reads ILDLILRVIAVISTLASAIAM. Residues 45-71 lie on the Extracellular side of the membrane; that stretch reads GTTNETLPLFTPFIQFKARYSDLPALT. N-linked (GlcNAc...) asparagine glycosylation occurs at asparagine 48. Residues 72-92 form a helical membrane-spanning segment; it reads FFVVANSIVSAYLILSLPLSI. The Cytoplasmic segment spans residues 93–104; it reads AHIIRSGAKYSR. Residues 105–125 form a helical membrane-spanning segment; the sequence is LVLIIFDAAMLALVTAASSAA. The Extracellular segment spans residues 126–158; the sequence is TAIVYLAHKGNVRANWLAICQQLDSFCERTSGS. Residues 159–179 form a helical membrane-spanning segment; sequence LVGSFGAMVLLILLILLSAMA. The Cytoplasmic segment spans residues 180–183; that stretch reads LARR.

The protein belongs to the Casparian strip membrane proteins (CASP) family. Homodimer and heterodimers.

Its subcellular location is the cell membrane. Regulates membrane-cell wall junctions and localized cell wall deposition. Required for establishment of the Casparian strip membrane domain (CSD) and the subsequent formation of Casparian strips, a cell wall modification of the root endodermis that determines an apoplastic barrier between the intraorganismal apoplasm and the extraorganismal apoplasm and prevents lateral diffusion. The protein is Casparian strip membrane protein 2 of Triticum aestivum (Wheat).